Reading from the N-terminus, the 402-residue chain is Flavohemoprotein (402 aa).

A Globin domain is found at methionine 1 to alanine 136. Histidine 85 contacts heme b. Active-site charge relay system residues include tyrosine 95 and glutamate 135. Residues glycine 147 to glutamine 402 are reductase. The FAD-binding FR-type domain occupies lysine 150–asparagine 260. FAD is bound by residues tyrosine 188 and arginine 204 to serine 207. Glycine 273–proline 278 is an NADP(+) binding site. Phenylalanine 394 to proline 397 contributes to the FAD binding site.

Belongs to the globin family. Two-domain flavohemoproteins subfamily. It in the C-terminal section; belongs to the flavoprotein pyridine nucleotide cytochrome reductase family. The cofactor is heme b. FAD is required as a cofactor.

The catalysed reaction is 2 nitric oxide + NADPH + 2 O2 = 2 nitrate + NADP(+) + H(+). The enzyme catalyses 2 nitric oxide + NADH + 2 O2 = 2 nitrate + NAD(+) + H(+). Functionally, is involved in NO detoxification in an aerobic process, termed nitric oxide dioxygenase (NOD) reaction that utilizes O(2) and NAD(P)H to convert NO to nitrate, which protects the bacterium from various noxious nitrogen compounds. Therefore, plays a central role in the inducible response to nitrosative stress. The polypeptide is Flavohemoprotein (Bacillus thuringiensis subsp. konkukian (strain 97-27)).